The primary structure comprises 364 residues: UDP-N-acetylglucosamine--N-acetylmuramyl-(pentapeptide) pyrophosphoryl-undecaprenol N-acetylglucosamine transferase (364 aa).

Residues T10–G12, N128, R170, S199, I250, and Q295 contribute to the UDP-N-acetyl-alpha-D-glucosamine site.

Belongs to the glycosyltransferase 28 family. MurG subfamily.

Its subcellular location is the cell inner membrane. The enzyme catalyses di-trans,octa-cis-undecaprenyl diphospho-N-acetyl-alpha-D-muramoyl-L-alanyl-D-glutamyl-meso-2,6-diaminopimeloyl-D-alanyl-D-alanine + UDP-N-acetyl-alpha-D-glucosamine = di-trans,octa-cis-undecaprenyl diphospho-[N-acetyl-alpha-D-glucosaminyl-(1-&gt;4)]-N-acetyl-alpha-D-muramoyl-L-alanyl-D-glutamyl-meso-2,6-diaminopimeloyl-D-alanyl-D-alanine + UDP + H(+). It participates in cell wall biogenesis; peptidoglycan biosynthesis. Cell wall formation. Catalyzes the transfer of a GlcNAc subunit on undecaprenyl-pyrophosphoryl-MurNAc-pentapeptide (lipid intermediate I) to form undecaprenyl-pyrophosphoryl-MurNAc-(pentapeptide)GlcNAc (lipid intermediate II). The polypeptide is UDP-N-acetylglucosamine--N-acetylmuramyl-(pentapeptide) pyrophosphoryl-undecaprenol N-acetylglucosamine transferase (Chlorobaculum parvum (strain DSM 263 / NCIMB 8327) (Chlorobium vibrioforme subsp. thiosulfatophilum)).